Consider the following 173-residue polypeptide: uncharacterized protein (173 aa).

Residues 1 to 21 (MFIVFYLILIIFIFIYFHVYI) form a helical membrane-spanning segment.

To T.pallidum TP0711.

It localises to the membrane. This is an uncharacterized protein from Borreliella burgdorferi (strain ATCC 35210 / DSM 4680 / CIP 102532 / B31) (Borrelia burgdorferi).